The sequence spans 208 residues: Small ribosomal subunit protein uS4 (208 aa).

A disordered region spans residues 29–48 (MERRPYGPGQHGRARRKQDS). Residues 95-155 (QRLDALVLRA…ERSEKMVPFQ (61 aa)) enclose the S4 RNA-binding domain.

It belongs to the universal ribosomal protein uS4 family. As to quaternary structure, part of the 30S ribosomal subunit. Contacts protein S5. The interaction surface between S4 and S5 is involved in control of translational fidelity.

In terms of biological role, one of the primary rRNA binding proteins, it binds directly to 16S rRNA where it nucleates assembly of the body of the 30S subunit. Its function is as follows. With S5 and S12 plays an important role in translational accuracy. In Micrococcus luteus (strain ATCC 4698 / DSM 20030 / JCM 1464 / CCM 169 / CCUG 5858 / IAM 1056 / NBRC 3333 / NCIMB 9278 / NCTC 2665 / VKM Ac-2230) (Micrococcus lysodeikticus), this protein is Small ribosomal subunit protein uS4.